We begin with the raw amino-acid sequence, 559 residues long: Dihydroxy-acid dehydratase (559 aa).

[2Fe-2S] cluster is bound at residue C49. D81 serves as a coordination point for Mg(2+). C122 contributes to the [2Fe-2S] cluster binding site. Mg(2+)-binding residues include D123 and K124. At K124 the chain carries N6-carboxylysine. C194 lines the [2Fe-2S] cluster pocket. Residue E446 coordinates Mg(2+). S472 serves as the catalytic Proton acceptor.

The protein belongs to the IlvD/Edd family. As to quaternary structure, homodimer. Requires [2Fe-2S] cluster as cofactor. Mg(2+) serves as cofactor.

The catalysed reaction is (2R)-2,3-dihydroxy-3-methylbutanoate = 3-methyl-2-oxobutanoate + H2O. The enzyme catalyses (2R,3R)-2,3-dihydroxy-3-methylpentanoate = (S)-3-methyl-2-oxopentanoate + H2O. It functions in the pathway amino-acid biosynthesis; L-isoleucine biosynthesis; L-isoleucine from 2-oxobutanoate: step 3/4. Its pathway is amino-acid biosynthesis; L-valine biosynthesis; L-valine from pyruvate: step 3/4. Functionally, functions in the biosynthesis of branched-chain amino acids. Catalyzes the dehydration of (2R,3R)-2,3-dihydroxy-3-methylpentanoate (2,3-dihydroxy-3-methylvalerate) into 2-oxo-3-methylpentanoate (2-oxo-3-methylvalerate) and of (2R)-2,3-dihydroxy-3-methylbutanoate (2,3-dihydroxyisovalerate) into 2-oxo-3-methylbutanoate (2-oxoisovalerate), the penultimate precursor to L-isoleucine and L-valine, respectively. The sequence is that of Dihydroxy-acid dehydratase from Prochlorococcus marinus (strain MIT 9515).